A 225-amino-acid chain; its full sequence is 3-dehydroquinate dehydratase (225 aa).

Residues Ser-6, 30–32 (EWR), and Arg-62 contribute to the 3-dehydroquinate site. His-118 functions as the Proton donor/acceptor in the catalytic mechanism. Lys-143 serves as the catalytic Schiff-base intermediate with substrate. 3-dehydroquinate-binding residues include Arg-186, Ser-205, and Gln-209.

This sequence belongs to the type-I 3-dehydroquinase family. As to quaternary structure, homodimer.

It carries out the reaction 3-dehydroquinate = 3-dehydroshikimate + H2O. The protein operates within metabolic intermediate biosynthesis; chorismate biosynthesis; chorismate from D-erythrose 4-phosphate and phosphoenolpyruvate: step 3/7. Functionally, involved in the third step of the chorismate pathway, which leads to the biosynthesis of aromatic amino acids. Catalyzes the cis-dehydration of 3-dehydroquinate (DHQ) and introduces the first double bond of the aromatic ring to yield 3-dehydroshikimate. This Streptococcus pneumoniae (strain Hungary19A-6) protein is 3-dehydroquinate dehydratase.